Consider the following 192-residue polypeptide: Peptidyl-tRNA hydrolase (192 aa).

Tyr14 is a binding site for tRNA. The active-site Proton acceptor is His19. TRNA contacts are provided by Tyr64, Asn66, and Asn112.

This sequence belongs to the PTH family. As to quaternary structure, monomer.

The protein localises to the cytoplasm. It carries out the reaction an N-acyl-L-alpha-aminoacyl-tRNA + H2O = an N-acyl-L-amino acid + a tRNA + H(+). In terms of biological role, hydrolyzes ribosome-free peptidyl-tRNAs (with 1 or more amino acids incorporated), which drop off the ribosome during protein synthesis, or as a result of ribosome stalling. Catalyzes the release of premature peptidyl moieties from peptidyl-tRNA molecules trapped in stalled 50S ribosomal subunits, and thus maintains levels of free tRNAs and 50S ribosomes. This Anaeromyxobacter dehalogenans (strain 2CP-1 / ATCC BAA-258) protein is Peptidyl-tRNA hydrolase.